Reading from the N-terminus, the 312-residue chain is Holliday junction branch migration complex subunit RuvB (312 aa).

Residues 1–168 (MKTNNEFRPQ…FGHVFYLSEY (168 aa)) are large ATPase domain (RuvB-L). ATP-binding positions include R8, G49, K52, T53, T54, 115–117 (EDF), R158, Y168, and R206. T53 provides a ligand contact to Mg(2+). The interval 169-234 (ETSEIAAIIL…NIKNIFEKIQ (66 aa)) is small ATPAse domain (RuvB-S). Positions 237-312 (DFGLEEQDIN…EFLKNNQLIK (76 aa)) are head domain (RuvB-H). 2 residues coordinate DNA: K290 and R295.

This sequence belongs to the RuvB family. Homohexamer. Forms an RuvA(8)-RuvB(12)-Holliday junction (HJ) complex. HJ DNA is sandwiched between 2 RuvA tetramers; dsDNA enters through RuvA and exits via RuvB. An RuvB hexamer assembles on each DNA strand where it exits the tetramer. Each RuvB hexamer is contacted by two RuvA subunits (via domain III) on 2 adjacent RuvB subunits; this complex drives branch migration. In the full resolvosome a probable DNA-RuvA(4)-RuvB(12)-RuvC(2) complex forms which resolves the HJ.

The protein localises to the cytoplasm. It catalyses the reaction ATP + H2O = ADP + phosphate + H(+). The RuvA-RuvB-RuvC complex processes Holliday junction (HJ) DNA during genetic recombination and DNA repair, while the RuvA-RuvB complex plays an important role in the rescue of blocked DNA replication forks via replication fork reversal (RFR). RuvA specifically binds to HJ cruciform DNA, conferring on it an open structure. The RuvB hexamer acts as an ATP-dependent pump, pulling dsDNA into and through the RuvAB complex. RuvB forms 2 homohexamers on either side of HJ DNA bound by 1 or 2 RuvA tetramers; 4 subunits per hexamer contact DNA at a time. Coordinated motions by a converter formed by DNA-disengaged RuvB subunits stimulates ATP hydrolysis and nucleotide exchange. Immobilization of the converter enables RuvB to convert the ATP-contained energy into a lever motion, pulling 2 nucleotides of DNA out of the RuvA tetramer per ATP hydrolyzed, thus driving DNA branch migration. The RuvB motors rotate together with the DNA substrate, which together with the progressing nucleotide cycle form the mechanistic basis for DNA recombination by continuous HJ branch migration. Branch migration allows RuvC to scan DNA until it finds its consensus sequence, where it cleaves and resolves cruciform DNA. The polypeptide is Holliday junction branch migration complex subunit RuvB (Ureaplasma urealyticum serovar 10 (strain ATCC 33699 / Western)).